The sequence spans 983 residues: MRLGSGTFATCCVAIEVLGIAVFLRGFFPAPVRSSARAEHGAEPPAPEPSAGASSNWTTLPPPLFSKVVIVLIDALRDDFVFGSKGVKFMPYTTYLVEKGASHSFVAEAKPPTVTMPRIKALMTGSLPGFVDVIRNLNSPALLEDSVIRQAKAAGKRIVFYGDETWVKLFPKHFVEYDGTTSFFVSDYTEVDNNVTRHLDKVLKRGDWDILILHYLGLDHIGHISGPNSPLIGQKLSEMDSVLMKIHTSLQSKERETPLPNLLVLCGDHGMSETGSHGASSTEEVNTPLILISSAFERKPGDIRHPKHVQQTDVAATLAIALGLPIPKDSVGSLLFPVVEGRPMREQLRFLHLNTVQLSKLLQENVPSYEKDPGFEQFKMSERLHGNWIRLYLEEKHSEVLFNLGSKVLRQYLDALKTLSLSLSAQVAQYDIYSMMVGTVVVLEVLTLLLLSVPQALRRKAELEVPLSSPGFSLLFYLVILVLSAVHVIVCTSAESSCYFCGLSWLAAGGVMVLASALLCVIVSVLTNVLVGGNTPRKNPMHPSSRWSELDLLILLGTAGHVLSLGASSFVEEEHQTWYFLVNTLCLALSQETYRNYFLGDDGEPPCGLCVEQGHDGATAAWQDGPGCDVLERDKGHGSPSTSEVLRGREKWMVLASPWLILACCRLLRSLNQTGVQWAHRPDLGHWLTSSDHKAELSVLAALSLLVVFVLVQRGCSPVSKAALALGLLGVYCYRAAIGSVRFPWRPDSKDISKGIIEARFVYVFVLGILFTGTKDLLKSQVIAADFKLKTVGLWEIYSGLVLLAALLFRPHNLPVLAFSLLIQTLMTKFIWKPLRHDAAEITVMHYWFGQAFFYFQGNSNNIATVDISAGFVGLDTYVEIPAVLLTAFGTYAGPVLWASHLVHFLSSETRSGSALSHACFCYALICSIPVFTYIVLVTSLRYHLFIWSVFSPKLLYEGMHLLITAAVCVFFTAMDQTRLTQS.

Over 1 to 431 (MRLGSGTFAT…SLSAQVAQYD (431 aa)) the chain is Lumenal. Residue Asn194 is glycosylated (N-linked (GlcNAc...) asparagine). A run of 12 helical transmembrane segments spans residues 432 to 452 (IYSM…LLLS), 471 to 491 (GFSL…VIVC), 506 to 526 (LAAG…VSVL), 552 to 572 (LLIL…SFVE), 699 to 719 (VLAA…CSPV), 721 to 741 (KAAL…IGSV), 752 to 772 (ISKG…ILFT), 789 to 809 (LKTV…ALLF), 812 to 832 (HNLP…KFIW), 879 to 899 (VEIP…VLWA), 919 to 939 (ACFC…VLVT), and 955 to 975 (LLYE…FTAM).

Belongs to the PIGG/PIGN/PIGO family. PIGG subfamily. In terms of assembly, part of the ethanolamine phosphate transferase 2 complex composed by PIGG and PIGF. PIGF is required to stabilize it. Competes with PIGO for the binding of PIGF.

The protein resides in the endoplasmic reticulum membrane. It functions in the pathway glycolipid biosynthesis; glycosylphosphatidylinositol-anchor biosynthesis. Catalytic subunit of the ethanolamine phosphate transferase 2 complex that transfers an ethanolamine phosphate (EtNP) from a phosphatidylethanolamine (PE) to the 6-OH position of the second alpha-1,6-linked mannose of a 6-PEtn-alpha-D-Man-(1-&gt;2)-alpha-D-Man-(1-&gt;6)-2-PEtn-alpha-D-Man-(1-&gt;4)-alpha-D-GlcN-(1-&gt;6)-(1-radyl,2-acyl-sn-glycero-3-phospho)-2-acyl-inositol (also termed H7) intermediate to generate a 6-PEtn-alpha-D-Man-(1-&gt;2)-6-PEtn-alpha-D-Man-(1-&gt;6)-2-PEtn-alpha-D-Man-(1-&gt;4)-alpha-D-GlcN-(1-&gt;6)-(1-radyl,2-acyl-sn-glycero-3-phospho)-2-acyl-inositol (also termed H8) and participates in the eleventh step of the glycosylphosphatidylinositol-anchor biosynthesis. The sequence is that of GPI ethanolamine phosphate transferase 2, catalytic subunit from Homo sapiens (Human).